Reading from the N-terminus, the 441-residue chain is MRLSRYFLPILRETPKEAEIVSHRLMLRAGMIRQEAAGIYAWLPLGLRVLNKVCDVIRAEQDRAGAVEILMPTIQAADLWRESGRYEAYGKEMLRLKDRHERELLYGPTAEEVVTEIFRASARSYKDLPKNLYQISWKFRDEVRPRFGTMRSREFLMKDGYSFDLDQAAARHSYNKVFVSYLRTFETLGLRAIPMRADTGPIGGDLSHEFIILAKTGESEVFCDRAYLDMPVPPPSVDFDDVAGLQGVVDSWTSHYAATDEMHDEAVFAEVPEASRLSARGIEVGHIFYFGTKYSTPMKAVVTGPDGQERPVHMGSYGIGPSRLVAATIEASHDEAGIIWPDAIAPFDVALINLKVGDAACDAACAEIQSALETAGLSVLYDDRDERPGAKFATADLIGLPWQVIVGPKGLAEGKIELKRRASGERETLDPVDLPARIRRV.

It belongs to the class-II aminoacyl-tRNA synthetase family. ProS type 2 subfamily. Homodimer.

It localises to the cytoplasm. The catalysed reaction is tRNA(Pro) + L-proline + ATP = L-prolyl-tRNA(Pro) + AMP + diphosphate. Catalyzes the attachment of proline to tRNA(Pro) in a two-step reaction: proline is first activated by ATP to form Pro-AMP and then transferred to the acceptor end of tRNA(Pro). The sequence is that of Proline--tRNA ligase from Methylorubrum populi (strain ATCC BAA-705 / NCIMB 13946 / BJ001) (Methylobacterium populi).